Here is a 90-residue protein sequence, read N- to C-terminus: Small ribosomal subunit protein uS15 (90 aa).

It belongs to the universal ribosomal protein uS15 family. Part of the 30S ribosomal subunit. Forms a bridge to the 50S subunit in the 70S ribosome, contacting the 23S rRNA.

Its function is as follows. One of the primary rRNA binding proteins, it binds directly to 16S rRNA where it helps nucleate assembly of the platform of the 30S subunit by binding and bridging several RNA helices of the 16S rRNA. Forms an intersubunit bridge (bridge B4) with the 23S rRNA of the 50S subunit in the ribosome. This is Small ribosomal subunit protein uS15 from Campylobacter fetus subsp. fetus (strain 82-40).